Reading from the N-terminus, the 196-residue chain is GTP cyclohydrolase 1 (196 aa).

Positions 86, 89, and 158 each coordinate Zn(2+).

This sequence belongs to the GTP cyclohydrolase I family. Toroid-shaped homodecamer, composed of two pentamers of five dimers.

It carries out the reaction GTP + H2O = 7,8-dihydroneopterin 3'-triphosphate + formate + H(+). It functions in the pathway cofactor biosynthesis; 7,8-dihydroneopterin triphosphate biosynthesis; 7,8-dihydroneopterin triphosphate from GTP: step 1/1. This Clostridium botulinum (strain Langeland / NCTC 10281 / Type F) protein is GTP cyclohydrolase 1.